The chain runs to 213 residues: MAAPATSVLSRQVRSFSTSVVRPFSKLVRPPVQVYGIEGRYATALYSAASKQKRLDQVEKELLRVGQLLKDPKVSLAVLNPYIKRSIKVKSLKDITTKEKFSPLTANLMNLLAENGRLGNTQGVISAFSTIMSVHRGEVPCTVTTAFPLDEAVLSELKTVLNSFLSKGQILNLEVKTDPSIMGGMIVRIGEKYVDMSAKSKIQKLSKAMRDLL.

A mitochondrion-targeting transit peptide spans 1–23; that stretch reads MAAPATSVLSRQVRSFSTSVVRP. Positions 5–23 match the SIFI-degron motif; it reads ATSVLSRQVRSFSTSVVRP. 3 positions are modified to N6-acetyllysine: lysine 60, lysine 70, and lysine 73. Lysine 90 is modified (N6-succinyllysine). An N6-acetyllysine; alternate mark is found at lysine 100 and lysine 158. N6-succinyllysine; alternate is present on residues lysine 100 and lysine 158. Lysine 176 and lysine 192 each carry N6-acetyllysine. Lysine 199 carries the N6-succinyllysine modification.

It belongs to the ATPase delta chain family. In terms of assembly, component of the ATP synthase complex composed at least of ATP5F1A/subunit alpha, ATP5F1B/subunit beta, ATP5MC1/subunit c (homooctomer), MT-ATP6/subunit a, MT-ATP8/subunit 8, ATP5ME/subunit e, ATP5MF/subunit f, ATP5MG/subunit g, ATP5MK/subunit k, ATP5MJ/subunit j, ATP5F1C/subunit gamma, ATP5F1D/subunit delta, ATP5F1E/subunit epsilon, ATP5PF/subunit F6, ATP5PB/subunit b, ATP5PD/subunit d, ATP5PO/subunit OSCP. ATP synthase complex consists of a soluble F(1) head domain (subunits alpha(3) and beta(3)) - the catalytic core - and a membrane F(0) domain - the membrane proton channel (subunits c, a, 8, e, f, g, k and j). These two domains are linked by a central stalk (subunits gamma, delta, and epsilon) rotating inside the F1 region and a stationary peripheral stalk (subunits F6, b, d, and OSCP). In response to mitochondrial stress, the precursor protein is ubiquitinated by the SIFI complex in the cytoplasm before mitochondrial import, leading to its degradation. Within the SIFI complex, UBR4 initiates ubiquitin chain that are further elongated or branched by KCMF1. In terms of tissue distribution, expressed by the principal cells of the epididymis. Detected in flagella of epididymal sperm (at protein level).

The protein resides in the mitochondrion. It localises to the mitochondrion inner membrane. Functionally, subunit OSCP, of the mitochondrial membrane ATP synthase complex (F(1)F(0) ATP synthase or Complex V) that produces ATP from ADP in the presence of a proton gradient across the membrane which is generated by electron transport complexes of the respiratory chain. ATP synthase complex consist of a soluble F(1) head domain - the catalytic core - and a membrane F(1) domain - the membrane proton channel. These two domains are linked by a central stalk rotating inside the F(1) region and a stationary peripheral stalk. During catalysis, ATP synthesis in the catalytic domain of F(1) is coupled via a rotary mechanism of the central stalk subunits to proton translocation. In vivo, can only synthesize ATP although its ATP hydrolase activity can be activated artificially in vitro. Part of the complex F(0) domain. Part of the complex F(0) domain and the peripheric stalk, which acts as a stator to hold the catalytic alpha(3)beta(3) subcomplex and subunit a/ATP6 static relative to the rotary elements. This chain is ATP synthase peripheral stalk subunit OSCP, mitochondrial, found in Rattus norvegicus (Rat).